We begin with the raw amino-acid sequence, 61 residues long: Large ribosomal subunit protein uL30 (61 aa).

It belongs to the universal ribosomal protein uL30 family. As to quaternary structure, part of the 50S ribosomal subunit.

The polypeptide is Large ribosomal subunit protein uL30 (Bordetella avium (strain 197N)).